The sequence spans 250 residues: Dimethyl sulfide dehydrogenase assembly chaperone protein (250 aa).

The interval 231–250 is disordered; it reads SAEARSDSAPDAAAHQNLWG.

This sequence belongs to the type II DMSO reductase enzyme chaperone family.

Its subcellular location is the cytoplasm. May function as a system-specific chaperone protein essential for the assembly of an active dimethyl sulfide dehydrogenase DdhABC. The sequence is that of Dimethyl sulfide dehydrogenase assembly chaperone protein (ddhD) from Rhodovulum sulfidophilum (Rhodobacter sulfidophilus).